The sequence spans 222 residues: 7-cyano-7-deazaguanine synthase (222 aa).

Residue 11-21 coordinates ATP; the sequence is LSGGMDSAVLL. Zn(2+)-binding residues include C192, C200, C203, and C206.

It belongs to the QueC family. It depends on Zn(2+) as a cofactor.

The enzyme catalyses 7-carboxy-7-deazaguanine + NH4(+) + ATP = 7-cyano-7-deazaguanine + ADP + phosphate + H2O + H(+). The protein operates within purine metabolism; 7-cyano-7-deazaguanine biosynthesis. Its function is as follows. Catalyzes the ATP-dependent conversion of 7-carboxy-7-deazaguanine (CDG) to 7-cyano-7-deazaguanine (preQ(0)). This Sulfurihydrogenibium sp. (strain YO3AOP1) protein is 7-cyano-7-deazaguanine synthase.